Here is a 162-residue protein sequence, read N- to C-terminus: NADH-quinone oxidoreductase subunit I (162 aa).

2 consecutive 4Fe-4S ferredoxin-type domains span residues 52 to 82 (LRRY…IEAG) and 93 to 122 (TRYD…EGPN). Cysteine 62, cysteine 65, cysteine 68, cysteine 72, cysteine 102, cysteine 105, cysteine 108, and cysteine 112 together coordinate [4Fe-4S] cluster.

It belongs to the complex I 23 kDa subunit family. As to quaternary structure, NDH-1 is composed of 14 different subunits. Subunits NuoA, H, J, K, L, M, N constitute the membrane sector of the complex. It depends on [4Fe-4S] cluster as a cofactor.

The protein resides in the cell inner membrane. It carries out the reaction a quinone + NADH + 5 H(+)(in) = a quinol + NAD(+) + 4 H(+)(out). Its function is as follows. NDH-1 shuttles electrons from NADH, via FMN and iron-sulfur (Fe-S) centers, to quinones in the respiratory chain. The immediate electron acceptor for the enzyme in this species is believed to be ubiquinone. Couples the redox reaction to proton translocation (for every two electrons transferred, four hydrogen ions are translocated across the cytoplasmic membrane), and thus conserves the redox energy in a proton gradient. In Xanthobacter autotrophicus (strain ATCC BAA-1158 / Py2), this protein is NADH-quinone oxidoreductase subunit I.